The primary structure comprises 639 residues: CREB3 regulatory factor (639 aa).

The interval 302-422 (PLPQEGPGSL…SVEDLKEVTS (121 aa)) is disordered. The span at 310-328 (SLAAGESSSLSASTSVSDS) shows a compositional bias: low complexity. Positions 339–351 (LFVSDNLGEQPTK) are enriched in polar residues. Over residues 355-370 (EEDEEDEEDVDDEDHD) the composition is skewed to acidic residues. Residues 371–380 (EGFGSEHELS) are compositionally biased toward basic and acidic residues. A compositionally biased stretch (acidic residues) spans 381–401 (ENEEEEEEEEDYEDDKDDDIS). The bZIP domain occupies 521–584 (TARPRSRKEK…VNRVQNPRDE (64 aa)). Residues 523-532 (RPRSRKEKNK) form a basic motif region. Residues 533-540 (LASRACRL) are leucine-zipper.

This sequence belongs to the bZIP family. CREBRF subfamily. Interacts (via leucine-zipper domain) with CREB3 (via leucine-zipper domain); the interaction promotes CREB3 degradation. In terms of processing, probably degraded by the proteasome.

It is found in the nucleus. In terms of biological role, acts as a negative regulator of the endoplasmic reticulum stress response or unfolded protein response (UPR). Represses the transcriptional activity of CREB3 during the UPR. Recruits CREB3 into nuclear foci. This is CREB3 regulatory factor (CREBRF) from Homo sapiens (Human).